Here is a 211-residue protein sequence, read N- to C-terminus: MNNEQPKIPQATAKRLPLYYRFLKNLHASGKQRVSSAELSEAVKVDSATIRRDFSYFGALGKKGYGYNVNYLLSFFRKTLDQDETTEVALFGVGNLGTAFLNYNFSKNNNTKIVMAFDVDPDKVGTKVGGVPVYHLDELEEKLGGITVAILTVPAQVAQPITDRLVQKGIKGILNFTPARLHVPEHIRVHHIDLAVELQSLVYFLKHYGNE.

A DNA-binding region (H-T-H motif) is located at residues 18 to 57 (LYYRFLKNLHASGKQRVSSAELSEAVKVDSATIRRDFSYF). 92-97 (GVGNLG) contacts NAD(+).

This sequence belongs to the transcriptional regulatory Rex family. As to quaternary structure, homodimer.

The protein resides in the cytoplasm. Modulates transcription in response to changes in cellular NADH/NAD(+) redox state. This is Redox-sensing transcriptional repressor Rex from Anoxybacillus flavithermus (strain DSM 21510 / WK1).